Reading from the N-terminus, the 194-residue chain is Holliday junction branch migration complex subunit RuvA (194 aa).

The domain I stretch occupies residues 1–64; it reads MIGRLRGILA…EDSVSLYGFL (64 aa). Residues 65–140 form a domain II region; it reads REGERRLFRD…RAADFSSGAP (76 aa). The segment at 140 to 144 is flexible linker; the sequence is PITGQ. The segment at 145 to 194 is domain III; it reads LGPDAVSEATVALQQLGYKPAEAARMAREAGAEGDEVATVIRKALQAALR.

This sequence belongs to the RuvA family. Homotetramer. Forms an RuvA(8)-RuvB(12)-Holliday junction (HJ) complex. HJ DNA is sandwiched between 2 RuvA tetramers; dsDNA enters through RuvA and exits via RuvB. An RuvB hexamer assembles on each DNA strand where it exits the tetramer. Each RuvB hexamer is contacted by two RuvA subunits (via domain III) on 2 adjacent RuvB subunits; this complex drives branch migration. In the full resolvosome a probable DNA-RuvA(4)-RuvB(12)-RuvC(2) complex forms which resolves the HJ.

Its subcellular location is the cytoplasm. The RuvA-RuvB-RuvC complex processes Holliday junction (HJ) DNA during genetic recombination and DNA repair, while the RuvA-RuvB complex plays an important role in the rescue of blocked DNA replication forks via replication fork reversal (RFR). RuvA specifically binds to HJ cruciform DNA, conferring on it an open structure. The RuvB hexamer acts as an ATP-dependent pump, pulling dsDNA into and through the RuvAB complex. HJ branch migration allows RuvC to scan DNA until it finds its consensus sequence, where it cleaves and resolves the cruciform DNA. In Xanthomonas campestris pv. campestris (strain 8004), this protein is Holliday junction branch migration complex subunit RuvA.